Reading from the N-terminus, the 301-residue chain is Tetratricopeptide repeat domain-containing protein PYG7, chloroplastic (301 aa).

The N-terminal 61 residues, 1–61 (MFESNMVLQT…FHDYVFAEIS (61 aa)), are a transit peptide targeting the chloroplast. Transmembrane regions (helical) follow at residues 82–102 (TFLL…AAAA) and 121–141 (IQLS…FYVI). TPR repeat units lie at residues 168–201 (ATEL…WDGD), 206–239 (AQVY…QPGY), and 240–273 (VTAW…DPNN).

Interacts with PSA3.

It is found in the plastid. It localises to the chloroplast thylakoid membrane. Nuclear genome-encoded factor required for the accumulation of photosystem I (PSI). Functions as a PSI biogenesis factor. Cooperates with PSA3 to promote the stable assembly of PSI in the thylakoid membrane. May target primarily the PsaC subunit. This chain is Tetratricopeptide repeat domain-containing protein PYG7, chloroplastic, found in Arabidopsis thaliana (Mouse-ear cress).